Here is a 180-residue protein sequence, read N- to C-terminus: DNA-directed RNA polymerase subunit omega (180 aa).

A disordered region spans residues 100–180 (ISKSGTPILP…NSDDSETTNS (81 aa)). Composition is skewed to acidic residues over residues 137 to 151 (EVDV…DEET) and 159 to 180 (AEAE…TTNS).

This sequence belongs to the RNA polymerase subunit omega family. The RNAP catalytic core consists of 2 alpha, 1 beta, 1 beta' and 1 omega subunit. When a sigma factor is associated with the core the holoenzyme is formed, which can initiate transcription.

It catalyses the reaction RNA(n) + a ribonucleoside 5'-triphosphate = RNA(n+1) + diphosphate. In terms of biological role, promotes RNA polymerase assembly. Latches the N- and C-terminal regions of the beta' subunit thereby facilitating its interaction with the beta and alpha subunits. The protein is DNA-directed RNA polymerase subunit omega of Pelagibacter ubique (strain HTCC1062).